The sequence spans 442 residues: Septin-8 (442 aa).

Over residues 1–16 the composition is skewed to basic and acidic residues; the sequence is MAATDLERVSSAEPEP. The disordered stretch occupies residues 1–23; sequence MAATDLERVSSAEPEPRSLSLGG. Ala2 is subject to N-acetylalanine. Phosphoserine is present on Ser10. The 267-residue stretch at 41–307 folds into the Septin-type G domain; sequence QGFSFNILCV…ELYRRCKLEE (267 aa). The segment at 51–58 is G1 motif; it reads GETGIGKS. GTP contacts are provided by residues 51–58, Gly106, 187–195, Gly241, and Arg256; these read GETGIGKS and KADTISKSE. A G3 motif region spans residues 103 to 106; sequence DAVG. The segment at 186 to 189 is G4 motif; the sequence is AKAD. Residues 322 to 410 adopt a coiled-coil conformation; that stretch reads LQETYEAKRK…RKAAVEALQS (89 aa). Residues 377–391 show a composition bias toward basic and acidic residues; it reads HQEEKRKVEEKRREL. A disordered region spans residues 377–442; it reads HQEEKRKVEE…WSSIYSVTIP (66 aa). Composition is skewed to polar residues over residues 408–420 and 432–442; these read LQSQALHATSQQP and GWSSIYSVTIP.

It belongs to the TRAFAC class TrmE-Era-EngA-EngB-Septin-like GTPase superfamily. Septin GTPase family. As to quaternary structure, septins polymerize into heterooligomeric protein complexes that form filaments, and can associate with cellular membranes, actin filaments and microtubules. GTPase activity is required for filament formation. Interacts with CDK14, SEPTIN4, SEPTIN5 and SEPTIN7. Interacts with VAMP2; the interaction inhibits interaction of VAMP2 with SYP. Interacts with STX1A.

The protein localises to the cytoplasm. The protein resides in the cytoskeleton. It is found in the synapse. Its subcellular location is the cell projection. It localises to the axon. The protein localises to the cytoplasmic vesicle. The protein resides in the secretory vesicle. It is found in the synaptic vesicle membrane. Its subcellular location is the presynapse. Its function is as follows. Filament-forming cytoskeletal GTPase. May play a role in platelet secretion. Seems to participate in the process of SNARE complex formation in synaptic vesicles. The polypeptide is Septin-8 (Otolemur garnettii (Small-eared galago)).